The chain runs to 386 residues: Putative matrix metalloproteinase (386 aa).

Residues 1–34 form the signal peptide; sequence MPTAHFQHSIRYLNVTNMLIFSIISFLLIYQTNS. N-linked (GlcNAc...) asparagine; by host glycosylation is found at N14 and N58. Residue H186 participates in Zn(2+) binding. E187 is an active-site residue. Residues H190 and H196 each contribute to the Zn(2+) site. The segment at 235–258 is disordered; the sequence is NEQSTHQSTRHRPHRRPSPDGSCR.

It belongs to the peptidase M10A family. Requires Zn(2+) as cofactor.

The sequence is that of Putative matrix metalloproteinase from Spodoptera frugiperda (Fall armyworm).